Reading from the N-terminus, the 232-residue chain is UPF0758 protein FN0909 (232 aa).

The MPN domain occupies 110–232 (KISNKDILLK…YFSFLEEGLI (123 aa)). Zn(2+) contacts are provided by histidine 181, histidine 183, and aspartate 194. Residues 181–194 (HNHPSDNITPSKSD) carry the JAMM motif motif.

It belongs to the UPF0758 family.

The sequence is that of UPF0758 protein FN0909 from Fusobacterium nucleatum subsp. nucleatum (strain ATCC 25586 / DSM 15643 / BCRC 10681 / CIP 101130 / JCM 8532 / KCTC 2640 / LMG 13131 / VPI 4355).